Reading from the N-terminus, the 1458-residue chain is Probable serine/threonine-protein kinase yakA (1458 aa).

A compositionally biased stretch (low complexity) spans N32–N76. A disordered region spans residues N32–N83. The Protein kinase domain maps to Y205–I548. ATP is bound by residues L211–V219 and K234. The Proton acceptor role is filled by D332. 2 disordered regions span residues H441–P462 and H545–Q571. Positions S446–N459 are enriched in low complexity. Positions N588–S643 form a coiled coil. 4 stretches are compositionally biased toward low complexity: residues T659–F709, S791–S800, Q808–N853, and D861–S870. 2 disordered regions span residues T659–F714 and S791–D874. Positions N878–L927 form a coiled coil. Disordered stretches follow at residues E930–I1095, N1128–I1161, D1233–Y1347, Q1375–S1399, and Q1435–T1458. Composition is skewed to low complexity over residues Q961–Q988, Q1016–Q1042, and Q1064–Q1093. Composition is skewed to polar residues over residues N1128 to G1158 and D1233 to P1245. Low complexity-rich tracts occupy residues S1246–Y1255 and N1264–N1279. Positions S1280 to F1291 are enriched in polar residues. Residues P1292–S1309 are compositionally biased toward low complexity. Composition is skewed to polar residues over residues G1310 to G1321 and Q1331 to S1344. Coiled coils occupy residues Q1346 to T1383 and R1409 to A1442.

The protein belongs to the protein kinase superfamily. CMGC Ser/Thr protein kinase family. MNB/DYRK subfamily.

The protein localises to the cytoplasm. The enzyme catalyses L-seryl-[protein] + ATP = O-phospho-L-seryl-[protein] + ADP + H(+). It catalyses the reaction L-threonyl-[protein] + ATP = O-phospho-L-threonyl-[protein] + ADP + H(+). It carries out the reaction L-tyrosyl-[protein] + ATP = O-phospho-L-tyrosyl-[protein] + ADP + H(+). In terms of biological role, general sensor of environmental conditions, such as heat stress, effecting changes through pkaC. Essential for survival to nitrosoative and oxidative stresses. Required for cell cycle control, not only at the onset but also during development (aggregation process and postaggregative development). The chain is Probable serine/threonine-protein kinase yakA (yakA) from Dictyostelium discoideum (Social amoeba).